We begin with the raw amino-acid sequence, 247 residues long: DNA polymerase sliding clamp (247 aa).

It belongs to the PCNA family. Homotrimer. The subunits circularize to form a toroid; DNA passes through its center. Replication factor C (RFC) is required to load the toroid on the DNA.

Its function is as follows. Sliding clamp subunit that acts as a moving platform for DNA processing. Responsible for tethering the catalytic subunit of DNA polymerase and other proteins to DNA during high-speed replication. In Natronomonas pharaonis (strain ATCC 35678 / DSM 2160 / CIP 103997 / JCM 8858 / NBRC 14720 / NCIMB 2260 / Gabara) (Halobacterium pharaonis), this protein is DNA polymerase sliding clamp.